The sequence spans 635 residues: tRNA uridine 5-carboxymethylaminomethyl modification enzyme MnmG (635 aa).

Glycine 15–glycine 20 is a binding site for FAD. Glycine 276 to phenylalanine 290 serves as a coordination point for NAD(+).

It belongs to the MnmG family. In terms of assembly, homodimer. Heterotetramer of two MnmE and two MnmG subunits. The cofactor is FAD.

It localises to the cytoplasm. Its function is as follows. NAD-binding protein involved in the addition of a carboxymethylaminomethyl (cmnm) group at the wobble position (U34) of certain tRNAs, forming tRNA-cmnm(5)s(2)U34. This chain is tRNA uridine 5-carboxymethylaminomethyl modification enzyme MnmG, found in Streptococcus sanguinis (strain SK36).